Reading from the N-terminus, the 491-residue chain is Nuatigenin 3-beta-glucosyltransferase (491 aa).

His-20 acts as the Proton acceptor in catalysis. His-20 serves as a coordination point for an anthocyanidin. Asp-125 acts as the Charge relay in catalysis. UDP-alpha-D-glucose contacts are provided by Ala-352, Gln-354, His-369, Trp-372, Asn-373, Ser-374, and Glu-377. Ala-392 lines the an anthocyanidin pocket. Glu-393 and Gln-394 together coordinate UDP-alpha-D-glucose.

The protein belongs to the UDP-glycosyltransferase family. As to expression, expressed in roots, stems and leaves.

The catalysed reaction is nuatigenin + UDP-alpha-D-glucose = nuatigenin 3-beta-D-glucopyranoside + UDP + H(+). It catalyses the reaction diosgenin + UDP-alpha-D-glucose = diosgenin 3-O-beta-D-glucoside + UDP + H(+). The enzyme catalyses tigogenin + UDP-alpha-D-glucose = tigogenin 3-O-beta-D-glucopyranoside + UDP + H(+). It carries out the reaction solasodine + UDP-alpha-D-glucose = solasodine 3-beta-D-glucoside + UDP + H(+). The catalysed reaction is solanidine + UDP-alpha-D-glucose = solanidine 3-O-beta-D-glucopyranoside + UDP + H(+). It catalyses the reaction tomatidine + UDP-alpha-D-glucose = tomatidine 3-O-beta-D-glucopyranoside + UDP + H(+). Glucosyltransferase involved in steroid saponin biosynthesis. Catalyzes the 3-O-glucosylation of steroidal sapogenins, such as diosgenin, nuatigenin and tigogenin. Can glucosylate steroidal alkaloids, such as solanidine, solasodine and tomatidine. This Solanum aculeatissimum (Dutch eggplant) protein is Nuatigenin 3-beta-glucosyltransferase.